Here is a 366-residue protein sequence, read N- to C-terminus: Galactoside alpha-(1,2)-fucosyltransferase 1 (366 aa).

Topologically, residues 1–8 (MWPLSHRH) are cytoplasmic. The chain crosses the membrane as a helical; Signal-anchor for type II membrane protein span at residues 9 to 25 (LCLAFLLVCVLSAISFF). The Lumenal portion of the chain corresponds to 26–366 (LHVHQDSFRH…LSPLWTLAEP (341 aa)). Residues N66, N302, and N328 are each glycosylated (N-linked (GlcNAc...) asparagine).

It belongs to the glycosyltransferase 11 family.

It is found in the golgi apparatus. The protein localises to the golgi stack membrane. It catalyses the reaction a beta-D-galactosyl-(1-&gt;4)-N-acetyl-beta-D-glucosaminyl derivative + GDP-beta-L-fucose = an alpha-L-Fuc-(1-&gt;2)-beta-D-Gal-(1-&gt;4)-beta-D-GlcNAc derivative + GDP + H(+). It carries out the reaction a ganglioside GA1 + GDP-beta-L-fucose = a ganglioside Fuc-GA1 + GDP + H(+). The enzyme catalyses a beta-D-Gal-(1-&gt;3)-beta-D-GlcNAc-(1-&gt;3)-beta-D-Gal-(1-&gt;4)-beta-D-Glc-(1&lt;-&gt;1')-Cer(d18:1(4E)) + GDP-beta-L-fucose = alpha-L-fucosyl-(1-&gt;2)- beta-D-galactosyl-(1-&gt;3)-N-acetyl-beta-D-glucosaminyl-(1-&gt;3)-beta-D-galactosyl-(1-&gt;4)-beta-D-glucosyl-(1&lt;-&gt;1')-N-acylsphing-4-enine + GDP + H(+). The catalysed reaction is a neolactoside nLc4Cer(d18:1(4E)) + GDP-beta-L-fucose = a neolactoside IV(2)-alpha-Fuc-nLc4Cer(d18:1(4E)) + GDP + H(+). It catalyses the reaction a ganglioside GM1 + GDP-beta-L-fucose = a ganglioside Fuc-GM1 + GDP + H(+). It carries out the reaction beta-D-galactosyl-(1-&gt;3)-N-acetyl-D-galactosamine + GDP-beta-L-fucose = alpha-L-fucosyl-(1-&gt;2)-beta-D-galactosyl-(1-&gt;3)-N-acetyl-D-galactosamine + GDP + H(+). Its pathway is protein modification; protein glycosylation. Functionally, catalyzes the transfer of L-fucose, from a guanosine diphosphate-beta-L-fucose, to the terminal galactose residue of glycoconjugates through an alpha(1,2) linkage leading to H antigen synthesis that is an intermediate substrate in the synthesis of ABO blood group antigens. H antigen is essential for maturation of the glomerular layer of the main olfactory bulb, in cell migration and early cell-cell contacts during tumor associated angiogenesis. Preferentially fucosylates soluble lactose and to a lesser extent fucosylates glycolipids gangliosides GA1 and GM1a. This chain is Galactoside alpha-(1,2)-fucosyltransferase 1, found in Alouatta belzebul (Red-handed howler monkey).